The chain runs to 317 residues: Hps1-dma1 cluster cytochrome P450 monooxygenase cyp3.1 (317 aa).

The interval 183–205 is disordered; the sequence is PAIETDRKTSSHSRSPTALADKQ. Cys-260 contributes to the heme binding site.

It belongs to the cytochrome P450 family. The cofactor is heme.

The protein operates within secondary metabolite biosynthesis. Functionally, cytochrome P450 monooxygenase; part of the hps1-dma1 gene cluster that probably mediates the biosynthesis a derivative of cyclopiazonic acid (CPA). The hybrid polyketide synthase-nonribosomal peptide synthetase (PKS-NRPS) nps1 might incorporates acetyl-CoA, malonyl-CoA, and tryptophan (Trp) and utilizes a C-terminal redox-incompetent reductase domain to make and release the tryptophan tetramic acid, cyclo-acetoacetyl-L-tryptophan (c-AATrp), as the first intermediate in the pathway. In addition, the cluster also includes the tryptophan dimethylallyltransferase dma1, the FAD-dependent oxidoreductase toxD, the cytochrome P450 monooxygenase cyp3.1 and the methyltransferase DOTSEDRAFT_139328; the latter 2 being not present in all CPA-producing fungi but involved in additional modifications that occur in biosynthesis the of a range of CPA and CPA-like products. Further studies are required to clarify whether the CPA-like hps1-dma1 cluster is functional or a non-functional relic reflecting evolution of D.septosporum. The chain is Hps1-dma1 cluster cytochrome P450 monooxygenase cyp3.1 (cyp3.1) from Dothistroma septosporum (strain NZE10 / CBS 128990) (Red band needle blight fungus).